Consider the following 416-residue polypeptide: Histidine--tRNA ligase (416 aa).

Belongs to the class-II aminoacyl-tRNA synthetase family.

It is found in the cytoplasm. It carries out the reaction tRNA(His) + L-histidine + ATP = L-histidyl-tRNA(His) + AMP + diphosphate + H(+). The protein is Histidine--tRNA ligase of Methanococcus maripaludis (strain DSM 14266 / JCM 13030 / NBRC 101832 / S2 / LL).